Reading from the N-terminus, the 546-residue chain is Chaperonin GroEL (546 aa).

ATP is bound by residues 29–32 (TLGP), Lys-50, 86–90 (DGTTT), Gly-414, and Asp-494. The segment at 525–546 (KKESAAPAMPGHDGMGGMGGMM) is disordered. The span at 537–546 (DGMGGMGGMM) shows a compositional bias: gly residues.

This sequence belongs to the chaperonin (HSP60) family. In terms of assembly, forms a cylinder of 14 subunits composed of two heptameric rings stacked back-to-back. Interacts with the co-chaperonin GroES.

The protein localises to the cytoplasm. It carries out the reaction ATP + H2O + a folded polypeptide = ADP + phosphate + an unfolded polypeptide.. Its function is as follows. Together with its co-chaperonin GroES, plays an essential role in assisting protein folding. The GroEL-GroES system forms a nano-cage that allows encapsulation of the non-native substrate proteins and provides a physical environment optimized to promote and accelerate protein folding. This is Chaperonin GroEL from Bdellovibrio bacteriovorus (strain ATCC 15356 / DSM 50701 / NCIMB 9529 / HD100).